A 207-amino-acid polypeptide reads, in one-letter code: LexA repressor (207 aa).

Residues 28-48 (VREIGEAVGLASSSTVHGHLS) constitute a DNA-binding region (H-T-H motif). Residues S130 and K168 each act as for autocatalytic cleavage activity in the active site.

It belongs to the peptidase S24 family. As to quaternary structure, homodimer.

The catalysed reaction is Hydrolysis of Ala-|-Gly bond in repressor LexA.. Functionally, represses a number of genes involved in the response to DNA damage (SOS response), including recA and lexA. In the presence of single-stranded DNA, RecA interacts with LexA causing an autocatalytic cleavage which disrupts the DNA-binding part of LexA, leading to derepression of the SOS regulon and eventually DNA repair. The sequence is that of LexA repressor from Staphylococcus aureus (strain Mu3 / ATCC 700698).